Reading from the N-terminus, the 468-residue chain is Uronate isomerase (468 aa).

It belongs to the metallo-dependent hydrolases superfamily. Uronate isomerase family.

It carries out the reaction D-glucuronate = D-fructuronate. It catalyses the reaction aldehydo-D-galacturonate = keto-D-tagaturonate. It participates in carbohydrate metabolism; pentose and glucuronate interconversion. The polypeptide is Uronate isomerase (Bacteroides thetaiotaomicron (strain ATCC 29148 / DSM 2079 / JCM 5827 / CCUG 10774 / NCTC 10582 / VPI-5482 / E50)).